Reading from the N-terminus, the 378-residue chain is Protein RecA (378 aa).

Residue 79 to 86 coordinates ATP; the sequence is GPESSGKT.

It belongs to the RecA family.

The protein resides in the cytoplasm. Can catalyze the hydrolysis of ATP in the presence of single-stranded DNA, the ATP-dependent uptake of single-stranded DNA by duplex DNA, and the ATP-dependent hybridization of homologous single-stranded DNAs. It interacts with LexA causing its activation and leading to its autocatalytic cleavage. This is Protein RecA from Streptococcus pyogenes serotype M49 (strain NZ131).